The sequence spans 900 residues: 3'-5' exonuclease DinG (900 aa).

The region spanning 8–161 is the Exonuclease domain; it reads VVDLETTGNQ…DEDAATTAQL (154 aa). Residues 241–496 enclose the Helicase ATP-binding domain; it reads TLVTKELGLT…KSIDLLEQQR (256 aa). 276 to 283 is an ATP binding site; that stretch reads APLGSGKS. The DEAH box signature appears at 448 to 451; that stretch reads DEAH. The region spanning 714–883 is the Helicase C-terminal domain; the sequence is YVIEYVSVVE…RYRQKKGDIK (170 aa).

The protein belongs to the helicase family. DinG subfamily. Type 2 sub-subfamily.

Functionally, 3'-5' exonuclease. This chain is 3'-5' exonuclease DinG, found in Staphylococcus saprophyticus subsp. saprophyticus (strain ATCC 15305 / DSM 20229 / NCIMB 8711 / NCTC 7292 / S-41).